The primary structure comprises 163 residues: uncharacterized protein (163 aa).

A disordered region spans residues 30–163 (GNENTSVSSD…IYKKLGKKKR (134 aa)). Residues 88-118 (ERQLQKKKEAEKIEGGKNHDNLKRKLNKVGD) are compositionally biased toward basic and acidic residues. Acidic residues predominate over residues 119-133 (ELNEQQSDTDDDDDD). Ser-125 is subject to Phosphoserine. Thr-127 carries the phosphothreonine modification.

It is found in the nucleus. It localises to the nucleolus. This is an uncharacterized protein from Schizosaccharomyces pombe (strain 972 / ATCC 24843) (Fission yeast).